The sequence spans 1316 residues: Myosin-5 (1316 aa).

Basic residues predominate over residues 1–12; it reads MAIVKRGGRTKT. The disordered stretch occupies residues 1 to 29; sequence MAIVKRGGRTKTKQQQVPAKSSGGGSSGG. Residues 43 to 731 enclose the Myosin motor domain; it reads VGVSDLTLLS…TLFALEDMRD (689 aa). Residue 136-143 participates in ATP binding; sequence GESGAGKT. The residue at position 366 (Ser-366) is a Phosphoserine. Residues 414 to 497 form an actin-binding region; that stretch reads SIGILDIYGF…PGLFAALNDS (84 aa). IQ domains follow at residues 735-755 and 756-781; these read HNMA…KEDA and AKTI…YGNG. Residues 789 to 981 enclose the TH1 domain; the sequence is RRRMSMLGSR…TVSVKQGLPA (193 aa). Disordered stretches follow at residues 964 to 1154 and 1209 to 1316; these read NGDH…PTLV and DYLK…DDDW. Composition is skewed to polar residues over residues 971–984 and 1018–1030; these read GTVS…ASSK and PRYN…ANSG. Residues 1042–1065 are compositionally biased toward low complexity; the sequence is QPQQYQPQQSQQQTPYPTQSSIPS. Over residues 1097–1106 the composition is skewed to polar residues; it reads SPTQQRQTPA. The span at 1117 to 1129 shows a compositional bias: low complexity; it reads ASTTIATTTSHTS. The segment covering 1137–1153 has biased composition (pro residues); sequence PAPPVKKTAPPPPPPTL. The region spanning 1156 to 1216 is the SH3 domain; that stretch reads PKFPTYKAMF…PIDYLKECSP (61 aa). Over residues 1223–1232 the composition is skewed to pro residues; the sequence is APPPPPPPPA. Over residues 1233 to 1268 the composition is skewed to low complexity; the sequence is ATASAGANGASNPISTTTSTNTTTSSHTTNATSNGS. Residues 1305 to 1316 show a composition bias toward acidic residues; that stretch reads SDDEEEEDDDDW.

Belongs to the TRAFAC class myosin-kinesin ATPase superfamily. Myosin family. Post-translationally, phosphorylation of the TEDS site (Ser-366) is required for the polarization of the actin cytoskeleton. Phosphorylation probably activates the myosin-I ATPase activity.

It localises to the cytoplasm. The protein resides in the cytoskeleton. Its subcellular location is the actin patch. In terms of biological role, type-I myosin implicated in the organization of the actin cytoskeleton. Required for proper actin cytoskeleton polarization and for the internalization step in endocytosis. At the cell cortex, assembles in patch-like structures together with proteins from the actin-polymerizing machinery and promotes actin assembly. Functions as actin nucleation-promoting factor (NPF) for the Arp2/3 complex. Plays a role in chitin deposition in the cell wall, in determination of the budding pattern, and is required for hyphae formation. The protein is Myosin-5 (MYO5) of Candida albicans (strain SC5314 / ATCC MYA-2876) (Yeast).